The primary structure comprises 411 residues: Flagellum-associated coiled-coil domain-containing protein 1 (411 aa).

Residues 52-77 (SQPAKSTAFPRDKAQSRKLEESNKAP) are disordered. The span at 61-74 (PRDKAQSRKLEESN) shows a compositional bias: basic and acidic residues. Coiled coils occupy residues 124 to 220 (SDII…LKNM) and 278 to 328 (NESF…VVLE). Residue Lys353 is modified to N6-acetyllysine. A coiled-coil region spans residues 355–385 (FQTKLAEAEEKYKSTIQVLTEENNSLRQKVL).

The protein resides in the cytoplasm. Its subcellular location is the cytoplasmic granule. It localises to the cell projection. The protein localises to the cilium. It is found in the flagellum. The polypeptide is Flagellum-associated coiled-coil domain-containing protein 1 (Rattus norvegicus (Rat)).